The following is a 396-amino-acid chain: Cysteine desulfurase (396 aa).

Pyridoxal 5'-phosphate is bound by residues 71-72, Asn148, Gln176, and 196-198; these read GT and SGH. Lys199 is modified (N6-(pyridoxal phosphate)lysine). Pyridoxal 5'-phosphate is bound at residue Thr231. Residue Cys319 is the Cysteine persulfide intermediate of the active site. [2Fe-2S] cluster is bound at residue Cys319.

The protein belongs to the class-V pyridoxal-phosphate-dependent aminotransferase family. NifS/IscS subfamily. In terms of assembly, homodimer. It depends on pyridoxal 5'-phosphate as a cofactor.

The enzyme catalyses (sulfur carrier)-H + L-cysteine = (sulfur carrier)-SH + L-alanine. In terms of biological role, catalyzes the removal of elemental sulfur atoms from cysteine to produce alanine. Seems to participate in the biosynthesis of the nitrogenase metalloclusters by providing the inorganic sulfur required for the Fe-S core formation. This is Cysteine desulfurase from Azotobacter chroococcum mcd 1.